Reading from the N-terminus, the 331-residue chain is MKILAYCVRPDEIDSFKNFSEKYGHTVDLIPDSFGPSVAHLAKGYDGISILGNDTCNREALEKIKDCGIKYLATRTAGVNNIDFDAAKEFGINVANVPAYSPNSVSEFTVGLALSLTRKIPFALKRVELNNFALGGLIGVELRNLTLGVIGTGRIGLKVIEGFSGFGMKKMIGYDIFENEKAKEYIEYKSLDEVYKEADIITLHAPLTDDNYHMIGKESIAKMKDGVFIINAARGALIDSEALIEGLKSGKIAGAALDSYEYEQGVFHNNKMNEIMKDDTLARLKSFPNVVITPHLGFYTDEAVSNMVEITLMNLQEFELKGTCKNQRVCK.

NAD(+)-binding positions include 154–155 (RI), Asp-175, 205–206 (AP), Asn-211, 232–234 (AAR), and Asp-258. Residue Arg-234 is part of the active site. Glu-263 is a catalytic residue. The Proton donor role is filled by His-295.

It belongs to the D-isomer specific 2-hydroxyacid dehydrogenase family.

It catalyses the reaction (R)-3-phenyllactate + NAD(+) = 3-phenylpyruvate + NADH + H(+). It carries out the reaction (2R)-2-hydroxy-3-(4-hydroxyphenyl)propanoate + NAD(+) = 3-(4-hydroxyphenyl)pyruvate + NADH + H(+). The enzyme catalyses 3-(indol-3-yl)lactate + NAD(+) = indole-3-pyruvate + NADH + H(+). It participates in amino-acid degradation. In terms of biological role, essential for the reductive metabolism of L-phenylalanine, L-tyrosine and L-tryptophan. Catalyzes the conversion of phenylpyruvic acid to phenyllactic acid, 4-hydroxy-phenylpyruvic acid to 4-hydroxy-phenyllactic acid, and indolepyruvic acid to indolelactic acid. The protein is Aromatic 2-oxoacid reductase of Clostridium sporogenes (strain ATCC 7955 / DSM 767 / NBRC 16411 / NCIMB 8053 / NCTC 8594 / PA 3679).